We begin with the raw amino-acid sequence, 430 residues long: Argininosuccinate lyase (430 aa).

This sequence belongs to the lyase 1 family. Argininosuccinate lyase subfamily.

The protein localises to the cytoplasm. The catalysed reaction is 2-(N(omega)-L-arginino)succinate = fumarate + L-arginine. The protein operates within amino-acid biosynthesis; L-arginine biosynthesis; L-arginine from L-ornithine and carbamoyl phosphate: step 3/3. The protein is Argininosuccinate lyase of Sorangium cellulosum (strain So ce56) (Polyangium cellulosum (strain So ce56)).